Reading from the N-terminus, the 127-residue chain is Small ribosomal subunit protein eS8 (127 aa).

The segment at 1 to 25 (MTIFQGKSGKKPTGGNLKQAKKKRR) is disordered.

This sequence belongs to the eukaryotic ribosomal protein eS8 family. In terms of assembly, part of the 30S ribosomal subunit.

The protein is Small ribosomal subunit protein eS8 of Thermoplasma volcanium (strain ATCC 51530 / DSM 4299 / JCM 9571 / NBRC 15438 / GSS1).